The sequence spans 283 residues: Protease HtpX (283 aa).

Transmembrane regions (helical) follow at residues 4–24 and 33–53; these read ILLFLATNMAVMLVLGIILNV and GGILIMALLFGFAGSLISLFL. Residue histidine 139 coordinates Zn(2+). The active site involves glutamate 140. Residue histidine 143 participates in Zn(2+) binding. The next 2 membrane-spanning stretches (helical) occupy residues 147-167 and 190-210; these read GDMVTMALLQGVLNTFVIFLS and IYFLVSMVLEMLFGVLASIIA. Glutamate 218 contributes to the Zn(2+) binding site.

It belongs to the peptidase M48B family. Zn(2+) is required as a cofactor.

It localises to the cell inner membrane. This chain is Protease HtpX, found in Haemophilus influenzae (strain 86-028NP).